The sequence spans 175 residues: Peptidyl-prolyl cis-trans isomerase B (175 aa).

In terms of domain architecture, PPIase cyclophilin-type spans 3–172 (EQLYATLKTN…EDVVIESVVV (170 aa)).

Belongs to the cyclophilin-type PPIase family.

It localises to the cytoplasm. It carries out the reaction [protein]-peptidylproline (omega=180) = [protein]-peptidylproline (omega=0). With respect to regulation, inhibited by cyclosporin A (CsA). Its function is as follows. PPIases accelerate the folding of proteins. It catalyzes the cis-trans isomerization of proline imidic peptide bonds in oligopeptides. This Streptomyces anulatus (Streptomyces chrysomallus) protein is Peptidyl-prolyl cis-trans isomerase B (cypB).